We begin with the raw amino-acid sequence, 393 residues long: SH3 domain-binding protein 5-like (393 aa).

A disordered region spans residues 1-58; that stretch reads MAELRQVPGGRETPQGELRPEVVEDEVPRSPVAEEPGGGGSSSSEAKLSPREEEELDP. A Phosphothreonine modification is found at Thr-13. Residues 18–28 show a composition bias toward basic and acidic residues; that stretch reads LRPEVVEDEVP. Phosphoserine is present on residues Ser-30 and Ser-49. Coiled coils occupy residues 59–140 and 169–272; these read RIQE…YERA and WQEM…EQIH. Positions 273-332 are disordered; sequence ARRRGGLPPHPLGPRRSSPVGAEAGPEDMEDGDSGIEGAEGAGLEEGSSLGPGPAPDTDT. Acidic residues predominate over residues 297–306; sequence GPEDMEDGDS. Over residues 317–332 the composition is skewed to low complexity; the sequence is EEGSSLGPGPAPDTDT. 5 positions are modified to phosphoserine: Ser-343, Ser-350, Ser-358, Ser-362, and Ser-378. A disordered region spans residues 362–393; that stretch reads SLDGQELGTRSGGRRGSDGGARGGRHQRSVSL. The span at 384–393 shows a compositional bias: basic residues; sequence GGRHQRSVSL.

It belongs to the SH3BP5 family.

Its function is as follows. Functions as a guanine nucleotide exchange factor (GEF) for RAB11A. The polypeptide is SH3 domain-binding protein 5-like (SH3BP5L) (Homo sapiens (Human)).